Consider the following 301-residue polypeptide: Immune-associated nucleotide-binding protein 5 (301 aa).

In terms of domain architecture, AIG1-type G spans 11-214 (EPVRNIVLVG…FTEENDLNEK (204 aa)). The G1 stretch occupies residues 20-27 (GPTGNGKS). 20 to 28 (GPTGNGKSS) contributes to the GTP binding site. A G2 region spans residues 46 to 50 (CKTCK). Residues 63 to 66 (DTPG) are G3. A G4 region spans residues 133–136 (TGGD). The interval 172–174 (NNK) is G5. Asn173 contributes to the GTP binding site.

It belongs to the TRAFAC class TrmE-Era-EngA-EngB-Septin-like GTPase superfamily. AIG1/Toc34/Toc159-like paraseptin GTPase family. IAN subfamily. In terms of tissue distribution, expressed in pollen, cotyledons and lateral roots.

This Arabidopsis thaliana (Mouse-ear cress) protein is Immune-associated nucleotide-binding protein 5.